The sequence spans 534 residues: Dolichol kinase (534 aa).

Residues 1–16 (MTRQCPPQESGAALSG) are Cytoplasmic-facing. A helical membrane pass occupies residues 17-37 (SVLAEAAVVFAVVLSIHAAVW). Residues 38-72 (DRYSWCAVALAVQAFYVQYKWDRLLQQGNAVFQFR) are Extracellular-facing. A helical transmembrane segment spans residues 73–93 (MSANSGLLPASMVMPLLGLVM). The Cytoplasmic portion of the chain corresponds to 94-109 (KERCQTAGNPYFERFG). Residues 110–130 (IVVAATGMAVALFSSVLALGI) traverse the membrane as a helical segment. The Extracellular portion of the chain corresponds to 131 to 132 (TR). Residues 133–153 (PVPTNTCAISGLAGGVIIYIM) form a helical membrane-spanning segment. Residues 154–161 (RHSLSVGE) lie on the Cytoplasmic side of the membrane. Residues 162–182 (VIEVLEVLLIFVYLNMILLYL) traverse the membrane as a helical segment. At 183–186 (LPRC) the chain is on the extracellular side. Residues 187–207 (FTPGEALLVLGGISFVLNQLI) form a helical membrane-spanning segment. The Cytoplasmic portion of the chain corresponds to 208–220 (KRSLTESQGDPVD). The helical transmembrane segment at 221-241 (FFLLVVVVGMVLMGVFFSTLF) threads the bilayer. Topologically, residues 242–252 (VFMDSGTWASS) are extracellular. The helical transmembrane segment at 253-273 (IFFHLMTCVLGLGVVLPWLHW) threads the bilayer. The Cytoplasmic portion of the chain corresponds to 274-293 (LIRRNPLLWLLQFLFYTETR). A helical membrane pass occupies residues 294-314 (IYLLAYWSLLASVACLVVLYQ). The Extracellular segment spans residues 315 to 333 (NAKRSSSESKKHRAPTITR). Residues 334-350 (KYFHFIVVATYIPGIIF) traverse the membrane as a helical segment. Topologically, residues 351–355 (DRPLL) are cytoplasmic. Residues 356–376 (YVAATVCLAVFIFLEYVRYFR) form a helical membrane-spanning segment. Residues 377 to 397 (IKPLGHTLRSLLSLFLDERDS) are Extracellular-facing. A helical transmembrane segment spans residues 398 to 418 (GPLILTHIYLLLGMSLPIWLI). Topologically, residues 419-432 (PRPCTQKDSLEGAR) are cytoplasmic. The helical transmembrane segment at 433-453 (ALVPYAGVLAVGVGDTVASIF) threads the bilayer. Residues 454–468 (GSTMGEIRWPGTKKT) are Extracellular-facing. The tract at residues 455–470 (STMGEIRWPGTKKTFE) is CTP-binding. Residues 469 to 489 (FEGTMTSIFAQIISVALILIF) traverse the membrane as a helical segment. Over 490–491 (DS) the chain is Cytoplasmic. A helical membrane pass occupies residues 492–512 (GVDLNYSYAWILGSISTVSLL). The Extracellular portion of the chain corresponds to 513-534 (EAYTTQIDNLLLPLYLLILLMA).

The protein belongs to the polyprenol kinase family.

The protein resides in the endoplasmic reticulum membrane. It catalyses the reaction a di-trans,poly-cis-dolichol + CTP = a di-trans,poly-cis-dolichyl phosphate + CDP + H(+). It participates in protein modification; protein glycosylation. Catalyzes CTP-mediated phosphorylation of dolichol, the terminal step in de novo dolichyl monophosphate (Dol-P) biosynthesis. Dol-P is a lipid carrier essential for the synthesis of N-linked and O-linked oligosaccharides and for GPI anchors. The chain is Dolichol kinase from Mus musculus (Mouse).